A 471-amino-acid polypeptide reads, in one-letter code: Iroquois-class homeodomain protein IRX-2 (471 aa).

The homeobox; TALE-type DNA-binding region spans 112–175; sequence LNDPAYRKNA…ANARRRLKKE (64 aa). Disordered stretches follow at residues 176–373 and 424–471; these read NKMT…SPYP and APKA…QPYL. Ser186 bears the Phosphoserine mark. The span at 195-209 shows a compositional bias: basic and acidic residues; the sequence is DATRSKDESPDKAQE. Positions 261-273 are enriched in acidic residues; it reads DDLEDDEDDDEEG. A compositionally biased stretch (low complexity) spans 355 to 367; the sequence is PAAAAPASTGAPP. The span at 462 to 471 shows a compositional bias: gly residues; it reads VVGGGVQPYL.

It belongs to the TALE/IRO homeobox family.

Its subcellular location is the nucleus. The chain is Iroquois-class homeodomain protein IRX-2 (IRX2) from Homo sapiens (Human).